The following is a 131-amino-acid chain: Class I hydrophobin POH2 (131 aa).

The N-terminal stretch at 1–21 (MFFRTSSLFTTIVAFTVMAAA) is a signal peptide. 4 disulfides stabilise this stretch: Cys-50/Cys-110, Cys-57/Cys-104, Cys-58/Cys-91, and Cys-111/Cys-124. Asn-115 and Asn-128 each carry an N-linked (GlcNAc...) asparagine glycan.

The protein belongs to the fungal hydrophobin family. Self-assembles to form functional amyloid fibrils called rodlets. Self-assembly into fibrillar rodlets occurs spontaneously at hydrophobic:hydrophilic interfaces and the rodlets further associate laterally to form amphipathic monolayers. In terms of tissue distribution, expressionn is switched off in the fruiting bodies but abundantly expressed in the vegetative mycelium of both monokaryon and dikaryon.

It localises to the secreted. The protein resides in the cell wall. Aerial growth, conidiation, and dispersal of filamentous fungi in the environment rely upon a capability of their secreting small amphipathic proteins called hydrophobins (HPBs) with low sequence identity. Class I can self-assemble into an outermost layer of rodlet bundles on aerial cell surfaces, conferring cellular hydrophobicity that supports fungal growth, development and dispersal; whereas Class II form highly ordered films at water-air interfaces through intermolecular interactions but contribute nothing to the rodlet structure. POH2 is a class I hydrophobin that causes a large drop in the water-surface tension, enabling hyphae to breach the interface and grow into the air, in both the primary and the secondary mycelium. In the latter mycelium POH2 maight also play a role in the emergence of fruiting bodies. Secreted POH2 could also play a role in facilitating lignin degradation. In Pleurotus ostreatus (Oyster mushroom), this protein is Class I hydrophobin POH2.